A 139-amino-acid polypeptide reads, in one-letter code: DNA-directed RNA polymerase II subunit Rpb4 (139 aa).

Belongs to the eukaryotic RPB4 RNA polymerase subunit family. In terms of assembly, RNA polymerase II consists of 12 different subunits.

The protein resides in the nucleus. It localises to the chromosome. DNA-dependent RNA polymerase catalyzes the transcription of DNA into RNA using the four ribonucleoside triphosphates as substrates. Associates with POLR2G. The protein is DNA-directed RNA polymerase II subunit Rpb4 of Drosophila melanogaster (Fruit fly).